The sequence spans 41 residues: ORF3c protein (41 aa).

Functionally, may play a role in host modulation. This Severe acute respiratory syndrome coronavirus 2 (2019-nCoV) protein is ORF3c protein.